The primary structure comprises 913 residues: Calcium-activated chloride channel regulator 1 (913 aa).

The signal sequence occupies residues 1 to 21 (MGSFKSSVFILVLHLLEGALS). Residues 46–199 (DETLIQQIKD…DIAGKNVVNH (154 aa)) form a metalloprotease domain region. His156 contacts Zn(2+). The active site involves Glu157. Zn(2+) contacts are provided by His160 and Asn167. Positions 306–475 (IVCLVLDKSG…NGLIDAFGAL (170 aa)) constitute a VWFA domain. N-linked (GlcNAc...) asparagine glycans are attached at residues Asn503, Asn514, Asn770, Asn804, Asn810, Asn836, and Asn885.

It belongs to the CLCR family. In terms of processing, glycosylated. Post-translationally, the translation product is autoproteolytically cleaved by the metalloprotease domain in the endoplasmic reticulum into a N-terminal and a C-terminal products that remain physically associated with each other. The cleavage is necessary for calcium-activated chloride channel (CaCC) activation activity. Expressed in mucin-producing cells in the respiratory and intestinal tracts, cutaneous sweat glands, and renal mucous glands (at protein level). Strong overexpression in the airways of horses with recurrent airway obstruction (at protein level).

The protein resides in the secreted. It is found in the extracellular space. May be involved in mediating calcium-activated chloride conductance. May play critical roles in goblet cell metaplasia, mucus hypersecretion, cystic fibrosis and AHR. May be involved in the regulation of mucus production and/or secretion by goblet cells. Involved in the regulation of tissue inflammation in the innate immune response. May play a role as a tumor suppressor. Induces MUC5AC. The polypeptide is Calcium-activated chloride channel regulator 1 (CLCA1) (Equus caballus (Horse)).